We begin with the raw amino-acid sequence, 489 residues long: Betaine aldehyde dehydrogenase (489 aa).

K(+) is bound by residues threonine 26 and aspartate 93. 150–152 lines the NAD(+) pocket; the sequence is GAW. Catalysis depends on lysine 162, which acts as the Charge relay system. 176-179 contributes to the NAD(+) binding site; sequence KPSE. Valine 180 is a binding site for K(+). 229–232 serves as a coordination point for NAD(+); the sequence is GVET. Leucine 245 provides a ligand contact to K(+). Catalysis depends on glutamate 251, which acts as the Proton acceptor. Residues glycine 253, cysteine 285, and glutamate 386 each coordinate NAD(+). Cysteine 285 (nucleophile) is an active-site residue. Cysteine 285 is modified (cysteine sulfenic acid (-SOH)). Residues lysine 456 and glycine 459 each coordinate K(+). Glutamate 463 (charge relay system) is an active-site residue.

This sequence belongs to the aldehyde dehydrogenase family. In terms of assembly, dimer of dimers. It depends on K(+) as a cofactor.

It catalyses the reaction betaine aldehyde + NAD(+) + H2O = glycine betaine + NADH + 2 H(+). Its pathway is amine and polyamine biosynthesis; betaine biosynthesis via choline pathway; betaine from betaine aldehyde: step 1/1. Involved in the biosynthesis of the osmoprotectant glycine betaine. Catalyzes the irreversible oxidation of betaine aldehyde to the corresponding acid. The protein is Betaine aldehyde dehydrogenase of Burkholderia multivorans (strain ATCC 17616 / 249).